The sequence spans 97 residues: Protein RADIALIS-like 6 (97 aa).

The 53-residue stretch at 7–59 (SSISPWTFSQNKMFERALAVYDKDTPDRWHNVAKAVGGKTVEEVKRHYDILVE) folds into the SANT domain.

As to expression, expressed in the micropylar endosperm surrounding globular-stage embryos but no expression was detected elsewhere, including floral tissues.

It localises to the nucleus. Functionally, probable transcription factor. This chain is Protein RADIALIS-like 6 (RL6), found in Arabidopsis thaliana (Mouse-ear cress).